The chain runs to 264 residues: Flagellar brake protein YcgR 1 (264 aa).

The PilZ domain occupies 132–249 (QRREFFRLES…RLAMIERYIA (118 aa)).

It belongs to the YcgR family. Monomer. Interacts with the flagellar basal bodies.

It localises to the bacterial flagellum basal body. Its function is as follows. Acts as a flagellar brake, regulating swimming and swarming in a bis-(3'-5') cyclic diguanylic acid (c-di-GMP)-dependent manner. Binds 1 c-di-GMP dimer per subunit. Increasing levels of c-di-GMP lead to decreased motility. In Dechloromonas aromatica (strain RCB), this protein is Flagellar brake protein YcgR 1.